Here is a 152-residue protein sequence, read N- to C-terminus: Ribonuclease pancreatic beta-type (152 aa).

Residues 1-25 (MGLEKSFILFSLLVLVLGWVQPSLG) form the signal peptide. The span at 31-45 (SSADKFKRQHMDPES) shows a compositional bias: basic and acidic residues. The interval 31 to 53 (SSADKFKRQHMDPESPSKSSPTY) is disordered. Residues K35 and R38 each contribute to the substrate site. The Proton acceptor role is filled by H40. 4 disulfide bridges follow: C54–C112, C68–C123, C86–C138, and C93–C100. Substrate is bound by residues 69–73 (KPVNT), K94, and R113. The active-site Proton donor is H147.

It belongs to the pancreatic ribonuclease family. As to quaternary structure, monomer.

Its subcellular location is the secreted. The enzyme catalyses an [RNA] containing cytidine + H2O = an [RNA]-3'-cytidine-3'-phosphate + a 5'-hydroxy-ribonucleotide-3'-[RNA].. It carries out the reaction an [RNA] containing uridine + H2O = an [RNA]-3'-uridine-3'-phosphate + a 5'-hydroxy-ribonucleotide-3'-[RNA].. Its function is as follows. Endonuclease that catalyzes the cleavage of RNA on the 3' side of pyrimidine nucleotides. Acts on single-stranded and double-stranded RNA. This Rattus exulans (Polynesian rat) protein is Ribonuclease pancreatic beta-type.